The primary structure comprises 619 residues: P-granule-associated protein deps-1 (619 aa).

The segment at 62–101 (NFDNIEEAKNLERRSKIPLKFGEVILWNESDCDHDKRIIL) is required for prg-1 binding. Low complexity-rich tracts occupy residues 563-592 (SRATSARTTPAGSSIGSRSSIQSRASAATS) and 600-619 (GPSSRRTPSGTPQSSTSSRV). The interval 563–619 (SRATSARTTPAGSSIGSRSSIQSRASAATSVSSNRFVGPSSRRTPSGTPQSSTSSRV) is disordered.

Interacts (via N-terminus) with prg-1; the interaction is direct. May interact with edg-1. Expressed in germ cells.

It is found in the cytoplasmic granule. The protein localises to the cytoplasm. Its subcellular location is the perinuclear region. Its function is as follows. Component of P-granules which is required for P-granule formation and integrity in adult germ cells. Promotes the accumulation of glh-1 mRNA and localization of pgl-1 to P-granules. Involved in RNA-mediated gene silencing (RNAi) in the germline. In particular, it is required for piwi-interacting RNA (piRNA) gene silencing and positively regulates the formation of secondary 22G-RNAs, which are RNA-dependent RNA polymerase-derived endo-siRNAs, typically 22 nucleotides in length with a 5'guanosine residue. Its role in RNAi may also be through positively regulating the expression of the dsRNA-binding protein rde-4. Plays a role in small RNA-directed transgenerational epigenetic inheritance. This Caenorhabditis elegans protein is P-granule-associated protein deps-1.